Consider the following 954-residue polypeptide: Glycine dehydrogenase (decarboxylating) (954 aa).

The residue at position 704 (lysine 704) is an N6-(pyridoxal phosphate)lysine.

Belongs to the GcvP family. The glycine cleavage system is composed of four proteins: P, T, L and H. The cofactor is pyridoxal 5'-phosphate.

It carries out the reaction N(6)-[(R)-lipoyl]-L-lysyl-[glycine-cleavage complex H protein] + glycine + H(+) = N(6)-[(R)-S(8)-aminomethyldihydrolipoyl]-L-lysyl-[glycine-cleavage complex H protein] + CO2. Its function is as follows. The glycine cleavage system catalyzes the degradation of glycine. The P protein binds the alpha-amino group of glycine through its pyridoxal phosphate cofactor; CO(2) is released and the remaining methylamine moiety is then transferred to the lipoamide cofactor of the H protein. This chain is Glycine dehydrogenase (decarboxylating), found in Vibrio vulnificus (strain YJ016).